The sequence spans 451 residues: NAC domain containing protein 52 (451 aa).

The disordered stretch occupies residues 1 to 21 (MGRESVAVVTAPPSATAPGTA). In terms of domain architecture, NAC spans 27–178 (LAPGFRFHPT…AYVLCRVFHK (152 aa)). The DNA-binding element occupies 126–184 (LGMKKTLVFHSGRAPDGLRTNWVMHEYRLVEYETEKNGNLVQDAYVLCRVFHKNNIGPP). Disordered regions lie at residues 255–337 (DQQN…TTTT) and 370–400 (KKEK…KVND). Over residues 256–270 (QQNHHENDLKPEEHN) the composition is skewed to basic and acidic residues. Residues 272–292 (NNNYDENEETLKREQMEEEER) are a coiled coil. A compositionally biased stretch (low complexity) spans 318–337 (ESNNNSSRNTQDHCSSTTTT). Basic and acidic residues predominate over residues 370 to 384 (KKEKPQQPLRPHKEP). Residues 398–446 (VNDLQKEIHQMSVERETFKLEMMSAEAMISILQSRIDALRQENEELKKN) adopt a coiled-coil conformation.

In terms of assembly, interacts with JMJ14 and NAC050. Mostly expressed in floral organs, and, at low levels, in other organs.

It is found in the nucleus. In terms of biological role, transcriptional repressor that binds to the motif 5'-(C/T)A(C/A)G-3' in the promoter of target genes. Also binds to the 5'-CTTGNNNNNCAAG-3' consensus sequence in chromatin. Can bind to the mitochondrial dysfunction motif (MDM) present in the upstream regions of mitochondrial dysfunction stimulon (MDS) genes involved in mitochondrial retrograde regulation (MRR). Together with NAC050 and JMJ14, regulates gene expression and flowering time by associating with the histone demethylase JMJ14, probably by the promotion of RNA-mediated gene silencing. Regulates siRNA-dependent post-transcriptional gene silencing (PTGS) through SGS3 expression modulation. Required during pollen development. The chain is NAC domain containing protein 52 from Arabidopsis thaliana (Mouse-ear cress).